Here is a 134-residue protein sequence, read N- to C-terminus: Cytochrome c-550 (134 aa).

Residue Q1 is modified to Pyrrolidone carboxylic acid. Residues C15, C18, H19, and M100 each coordinate heme c.

Binds 1 heme c group covalently per subunit.

Electron donor for nitrous-oxide reductase. The chain is Cytochrome c-550 from Paracoccus pantotrophus (Thiosphaera pantotropha).